Here is a 289-residue protein sequence, read N- to C-terminus: Cyclin-dependent kinase inhibitor 4 (289 aa).

Disordered stretches follow at residues 1–31 (MGKY…ESSI), 56–160 (LQQQ…VSES), and 227–248 (SESN…TTPE). Positions 13 to 28 (AGAGAGGGGGGGGGGE) are enriched in gly residues. Positions 56–80 (LQQQQQRCLLQKPSSPSSLPPTSAS) are enriched in low complexity. Over residues 134 to 144 (CGRNPNPRSNL) the composition is skewed to polar residues.

This sequence belongs to the CDI family. ICK/KRP subfamily. Specifically interacts with CDKA-1, but not with CDKB1-1. Interacts with CYCD4-1. Binds to FBL17. Expressed in leaves and flowers and at lower levels in roots.

It localises to the nucleus. It is found in the nucleoplasm. Functionally, binds and inhibits CYCD2-1/CDKA-1 complex kinase activity. May target specifically CDKA-1. This Arabidopsis thaliana (Mouse-ear cress) protein is Cyclin-dependent kinase inhibitor 4 (KRP4).